Reading from the N-terminus, the 422-residue chain is Cystine lyase CORI3 (422 aa).

It belongs to the class-I pyridoxal-phosphate-dependent aminotransferase family. As to quaternary structure, homodimer. Pyridoxal 5'-phosphate serves as cofactor. As to expression, expressed in cotyledons, sepals, pistils, flower buds, phloem companion cells and vascular tissues of petiole, leaf, filament and fruit.

It carries out the reaction L-cystine + H2O = S-sulfanyl-L-cysteine + pyruvate + NH4(+). Its function is as follows. Possesses cystine lyase activity in vitro. Does not possess tyrosine aminotransferase, alanine aminotransferase, aspartate aminotransferase and tryptophan aminotransferase activities. The chain is Cystine lyase CORI3 from Arabidopsis thaliana (Mouse-ear cress).